Here is a 398-residue protein sequence, read N- to C-terminus: Arylacetamide deacetylase (398 aa).

The Cytoplasmic segment spans residues 1–5; the sequence is MGRTI. Residues 6 to 26 traverse the membrane as a helical; Signal-anchor for type II membrane protein segment; it reads FLLISVVLVAYYIYIPLPDDI. The Lumenal portion of the chain corresponds to 27–398; that stretch reads EEPWKIILGN…QYLNWLHKNL (372 aa). An N-linked (GlcNAc...) asparagine glycan is attached at Asn77. The Involved in the stabilization of the negatively charged intermediate by the formation of the oxyanion hole motif lies at 110 to 112; sequence HGG. An intrachain disulfide couples Cys115 to Cys339. The active site involves Ser188. N-linked (GlcNAc...) asparagine glycosylation is found at Asn192, Asn281, and Asn324. Active-site residues include Asp342 and His372.

It belongs to the 'GDXG' lipolytic enzyme family. In terms of tissue distribution, highest levels in liver with lower levels in jejunum, kidney and testis.

It localises to the endoplasmic reticulum membrane. The protein localises to the microsome membrane. It carries out the reaction a triacylglycerol + H2O = a diacylglycerol + a fatty acid + H(+). Functionally, displays cellular triglyceride lipase activity in liver, increases the levels of intracellular fatty acids derived from the hydrolysis of newly formed triglyceride stores and plays a role in very low-density lipoprotein assembly. Displays serine esterase activity in liver. Deacetylates a variety of arylacetamide substrates, including xenobiotic compounds and procarcinogens, converting them to the primary arylamide compounds and increasing their toxicity. This is Arylacetamide deacetylase (Aadac) from Rattus norvegicus (Rat).